The primary structure comprises 242 residues: NLP effector protein 8 (242 aa).

An N-terminal signal peptide occupies residues 1 to 17 (MHLTVFYLVALCTFASA). Residues 108–118 (AIMYAWYFPRD) carry the Conserved undecapeptide motif motif. Positions 127–133 (GHRNAWE) match the Conserved heptapeptide motif motif. Asn206 carries N-linked (GlcNAc...) asparagine glycosylation.

The protein belongs to the Necrosis inducing protein (NPP1) family.

The protein resides in the secreted. Functionally, probable secreted effector that may act as a pathogen-associated molecular pattern (PAMP) recognized by the plant immune system. In Plasmopara viticola (Downy mildew of grapevine), this protein is NLP effector protein 8.